The following is a 386-amino-acid chain: DNA-directed RNA polymerase subunit Rpo1C (386 aa).

Belongs to the RNA polymerase beta' chain family. In terms of assembly, part of the RNA polymerase complex.

It localises to the cytoplasm. The enzyme catalyses RNA(n) + a ribonucleoside 5'-triphosphate = RNA(n+1) + diphosphate. DNA-dependent RNA polymerase (RNAP) catalyzes the transcription of DNA into RNA using the four ribonucleoside triphosphates as substrates. Forms part of the jaw domain. This is DNA-directed RNA polymerase subunit Rpo1C from Methanococcus vannielii (strain ATCC 35089 / DSM 1224 / JCM 13029 / OCM 148 / SB).